The chain runs to 78 residues: Beta-defensin 105A (78 aa).

The N-terminal stretch at 1–27 (MALIRKTFYFLFAVFFILVQLPSGCQA) is a signal peptide. Cystine bridges form between Cys-46-Cys-74, Cys-53-Cys-67, and Cys-57-Cys-73.

Belongs to the beta-defensin family.

The protein localises to the secreted. In terms of biological role, has antimicrobial activity. The sequence is that of Beta-defensin 105A (DEFB105A) from Hylobates lar (Lar gibbon).